The following is a 158-amino-acid chain: Transcription elongation factor GreA (158 aa).

Positions 1 to 67 (MSNNIPLTKE…FIEGRIQELQ (67 aa)) form a coiled coil.

Belongs to the GreA/GreB family.

In terms of biological role, necessary for efficient RNA polymerase transcription elongation past template-encoded arresting sites. The arresting sites in DNA have the property of trapping a certain fraction of elongating RNA polymerases that pass through, resulting in locked ternary complexes. Cleavage of the nascent transcript by cleavage factors such as GreA or GreB allows the resumption of elongation from the new 3'terminus. GreA releases sequences of 2 to 3 nucleotides. This Trichlorobacter lovleyi (strain ATCC BAA-1151 / DSM 17278 / SZ) (Geobacter lovleyi) protein is Transcription elongation factor GreA.